A 278-amino-acid polypeptide reads, in one-letter code: Gamma carbonic anhydrase 2, mitochondrial (278 aa).

Residues 1-43 (MGTLGRAIYTVGNWIRGTGQALDRVGSLLQGSHRIEEHLSRHR) constitute a mitochondrion transit peptide. Residues 86-88 (RGD) and 101-102 (QD) each bind substrate. Zn(2+) is bound by residues histidine 107, histidine 130, and histidine 135. Asparagine 209 serves as a coordination point for substrate.

The protein belongs to the gamma-class carbonic anhydrase family. Homotrimer. Component of the mitochondrial oxidoreductase respiratory chain complex I; element of the extra matrix-exposed domain, which is attached to the membrane arm of this complex. Interacts with GAMMACAL1 and GAMMACAL2. Zn(2+) serves as cofactor. In terms of tissue distribution, constitutively expressed in roots and leaves, with higher levels in flowers, particularly in tapetal tissue of anthers, inflorescence (IM) and floral meristems (FM).

The protein resides in the mitochondrion membrane. Its function is as follows. Enzyme involved in the catabolism of H(2)CO(3) but that does not mediates the reversible hydration of carbon dioxide. Mediates complex I assembly in mitochondria and respiration. Binds HCO(3)-. Required for male fertility during anther development and dehiscence to regulate the secondary thickenings of the endothecial cell wall, probably by modulating H(2)O(2)-dependent lignin polymerization. The sequence is that of Gamma carbonic anhydrase 2, mitochondrial (GAMMACA2) from Arabidopsis thaliana (Mouse-ear cress).